Reading from the N-terminus, the 384-residue chain is MKHIAILGSTGSIGKNTLQVARHLKERIKVVAIAARENIDLLEAQSKEFCPDIIAVFNNAKAYELQKRLPGKTVLAGMEGLLAAASYSEADLVISAMTGTMGLQPTIEAIKAGKDVGLANKEALVSGGAIIMKLVKEKNINLLPIDSEHSAIFQCLNGEALKSVQRIILTSSGGPFRTWTQEQLETVTVEQALNHPTWSMGPKVTIDSSTLMNKGLEVIEAFWLFDVSPEQIDVIVHPQSIIHSLVEFCDGSMLAQMSEPNMIVPIQYSLTYPDRAPGLFKPFDFMKNSKLEFFEPNKKTFRCLALAYEALKCGGTLPCYMNAANEVLVERFLKGELSWKNIGIQLEKLMDQHASISVDSLETILAVDALAREEAARSKLISTK.

Positions 10, 11, 12, 13, 38, and 120 each coordinate NADPH. K121 lines the 1-deoxy-D-xylulose 5-phosphate pocket. E122 contacts NADPH. Mn(2+) is bound at residue D146. Positions 147, 148, 172, and 195 each coordinate 1-deoxy-D-xylulose 5-phosphate. Residue E148 coordinates Mn(2+). G201 is a binding site for NADPH. 1-deoxy-D-xylulose 5-phosphate contacts are provided by S208, N213, K214, and E217. Position 217 (E217) interacts with Mn(2+).

It belongs to the DXR family. Mg(2+) serves as cofactor. It depends on Mn(2+) as a cofactor.

The catalysed reaction is 2-C-methyl-D-erythritol 4-phosphate + NADP(+) = 1-deoxy-D-xylulose 5-phosphate + NADPH + H(+). It functions in the pathway isoprenoid biosynthesis; isopentenyl diphosphate biosynthesis via DXP pathway; isopentenyl diphosphate from 1-deoxy-D-xylulose 5-phosphate: step 1/6. In terms of biological role, catalyzes the NADPH-dependent rearrangement and reduction of 1-deoxy-D-xylulose-5-phosphate (DXP) to 2-C-methyl-D-erythritol 4-phosphate (MEP). This is 1-deoxy-D-xylulose 5-phosphate reductoisomerase from Protochlamydia amoebophila (strain UWE25).